The following is a 682-amino-acid chain: DNA ligase (682 aa).

Residues 43 to 47 (DSEYD), 92 to 93 (SL), and D123 contribute to the NAD(+) site. Residue K125 is the N6-AMP-lysine intermediate of the active site. Residues R146, E184, K302, and K326 each contribute to the NAD(+) site. Zn(2+) is bound by residues C420, C423, C438, and C443. In terms of domain architecture, BRCT spans 603–682 (TTKGFFTGKK…TFLQKLLIVL (80 aa)).

This sequence belongs to the NAD-dependent DNA ligase family. LigA subfamily. Mg(2+) is required as a cofactor. The cofactor is Mn(2+).

It catalyses the reaction NAD(+) + (deoxyribonucleotide)n-3'-hydroxyl + 5'-phospho-(deoxyribonucleotide)m = (deoxyribonucleotide)n+m + AMP + beta-nicotinamide D-nucleotide.. DNA ligase that catalyzes the formation of phosphodiester linkages between 5'-phosphoryl and 3'-hydroxyl groups in double-stranded DNA using NAD as a coenzyme and as the energy source for the reaction. It is essential for DNA replication and repair of damaged DNA. The sequence is that of DNA ligase from Lawsonia intracellularis (strain PHE/MN1-00).